We begin with the raw amino-acid sequence, 304 residues long: N-carbamoyl-D-amino acid hydrolase (304 aa).

In terms of domain architecture, CN hydrolase spans 5–276 (MILAVGQQGP…DEVITAAVCL (272 aa)). Catalysis depends on residues E47, K127, and C172.

As to quaternary structure, homotetramer.

The catalysed reaction is an N-carbamoyl-D-amino acid + H2O + 2 H(+) = a D-alpha-amino acid + NH4(+) + CO2. The activity decreases with increasing concentration of H(2)O(2). Has 68% and 43% of activity remaining upon treatment with 0.1 and 0.2 mM H(2)O(2) for 30 minutes, respectively. Inhibited significantly by 2 mM Zn(2+), Cu(2+) and Ag(+), moderately by Co(2+), Mn(2+), Sn(2+) and Mg(2+), and only slightly by Ba(2+). Slightly activated by Fe(2+) and Ca(2+). No effect on activity by metal chelators EDTA and 8-hydroxyquinoline at 2 mM or by dithiothreitol, 2-mercaptoethanol or phenylmethanesulfonyl fluoride. Its function is as follows. Catalyzes the hydrolysis of N-carbamoyl-D-amino acids to the corresponding D-amino acids. Hydrolyzes aromatic and aliphatic N-carbamoyl-D-amino acids in vitro. Effectively hydrolyzes N-carbamoyl-D-p-hydroxyphenylglycine and N-carbamoyl-DL-p-hydroxyphenylglycine, and to a lesser extent N-carbamoyl-D-methionine. No activity for N-carbamoyl-L-amino acids, N-carbamoyl-beta-alanine or (RS)-alpha-ethyl-N-carbamoylphenylglycine in vitro. In Ensifer adhaerens (Sinorhizobium morelense), this protein is N-carbamoyl-D-amino acid hydrolase.